Reading from the N-terminus, the 273-residue chain is MKKATQSKAWTTVQIARHPERPQFLDYVGEIFTEFDALHGDRLFGDDGAMVGGLARFDGQPVMVIGQHRGRSTREKLKHNFGMCNPEGYRKSQRLLDMAERFNLPVFTFIDTMGAYPGVGAEERGQAEAIATSLAQLSSLKVPVIATVLGEGGSGGALGIGVADRVIMLSHSIYSVISPEGCASILWKTAEKAAQASEALGLTADKLQSLGIVEYVVDEGEGAHLDPERVMQNLKVVLKQALDELLPMDANERCEARYQRLMKFGSENLGMAS.

In terms of domain architecture, CoA carboxyltransferase C-terminal spans 1-244; sequence MKKATQSKAW…KVVLKQALDE (244 aa).

Belongs to the AccA family. As to quaternary structure, acetyl-CoA carboxylase is a heterohexamer composed of biotin carboxyl carrier protein (AccB), biotin carboxylase (AccC) and two subunits each of ACCase subunit alpha (AccA) and ACCase subunit beta (AccD).

The protein resides in the cytoplasm. The catalysed reaction is N(6)-carboxybiotinyl-L-lysyl-[protein] + acetyl-CoA = N(6)-biotinyl-L-lysyl-[protein] + malonyl-CoA. The protein operates within lipid metabolism; malonyl-CoA biosynthesis; malonyl-CoA from acetyl-CoA: step 1/1. Component of the acetyl coenzyme A carboxylase (ACC) complex. First, biotin carboxylase catalyzes the carboxylation of biotin on its carrier protein (BCCP) and then the CO(2) group is transferred by the carboxyltransferase to acetyl-CoA to form malonyl-CoA. In Acinetobacter baumannii (strain AB0057), this protein is Acetyl-coenzyme A carboxylase carboxyl transferase subunit alpha.